The primary structure comprises 184 residues: Protein Iojap-related, mitochondrial (184 aa).

A mitochondrion-targeting transit peptide spans 1–39 (MLTTLRSRCSSLLLNQSWKLAPNRIFASSPSFSSSAGIS).

This sequence belongs to the Iojap/RsfS family.

Its subcellular location is the mitochondrion. Its function is as follows. May be a ribosome silencing factor involved in organelle biogenesis and required for germination. This Arabidopsis thaliana (Mouse-ear cress) protein is Protein Iojap-related, mitochondrial.